A 159-amino-acid chain; its full sequence is uncharacterized protein (159 aa).

This is an uncharacterized protein from Bacillus subtilis (strain 168).